A 98-amino-acid polypeptide reads, in one-letter code: uncharacterized protein (98 aa).

Residues 1–23 (MKYVALAFVLSLVILQISAQVGA) form the signal peptide.

Nacreous layer of shell (at protein level). Expressed primarily in the mantle with highest level in the mantle pallium and lower level in the mantle edge.

It is found in the secreted. This is an uncharacterized protein from Pinctada maxima (Silver-lipped pearl oyster).